The following is a 1373-amino-acid chain: TAL effector protein PthXo1 (1373 aa).

Disordered regions lie at residues 1–68 and 127–152; these read MDPI…SAGS and AARPPRAKPAPRRRAAQPSDASPAAQ. A compositionally biased stretch (basic residues) spans 131–141; sequence PRAKPAPRRRA. The segment covering 142-152 has biased composition (low complexity); the sequence is AQPSDASPAAQ. Residues 221–239 form a Cryptic repeat -1 repeat; the sequence is THEDIVGVGKQWSGARALE. One copy of the Cryptic repeat 0 repeat lies at 256 to 273; the sequence is DTGQLVKIAKRGGVTAVE. Core repeat repeat units follow at residues 289–322, 323–356, 357–390, 391–424, 425–458, 459–492, 493–525, 526–559, 560–593, 594–627, 628–661, 662–695, 696–729, 730–763, 764–797, 798–831, 832–865, 866–899, 900–933, 934–967, 968–1001, 1002–1034, and 1035–1068; these read LTPAQVVAIASNNGGKQALETVQRLLPVLCQAHG, LTPAQVVAIASHDGGKQALETMQRLLPVLCQAHG, LPPDQVVAIASNIGGKQALETVQRLLPVLCQAHG, LTPDQVVAIASHGGGKQALETVQRLLPVLCQAHG, LTPDQVVAIASHDGGKQALETVQRLLPVLCQAHG, LTPDQVVAIASNGGGKQALETVQRLLPVLCQAHG, LTPDQVVAIASNGGKQALETVQRLLPVLCQAHG, LTPDQVVAIASHDGGKQALETVQRLLPVLCQTHG, LTPAQVVAIASHDGGKQALETVQQLLPVLCQAHG, LTPDQVVAIASNIGGKQALATVQRLLPVLCQAHG, LTQVQVVAIASNIGGKQALETVQRLLPVLCQAHG, LTPAQVVAIASHDGGKQALETVQRLLPVLCQAHG, LTQEQVVAIASNNGGKQALETVQRLLPVLCQAHG, LTPAQVVAIASNIGGKQALETVQRLLPVLCQDHG, LTLAQVVAIASNIGGKQALETVQRLLPVLCQAHG, LTQDQVVAIASNIGGKQALETVQRLLPVLCQDHG, LTPDQVVAIASNIGGKQALETVQRLLPVLCQDHG, LTLDQVVAIASNGGKQALETVQRLLPVLCQDHG, and LTPDQVVAIASNSGGKQALETVQRLLPVLCQDHG. HEAT repeat units follow at residues 714 to 760, 782 to 828, 850 to 893, and 918 to 961; these read LETV…VLCQ and LETV…LLPV. An HEAT 5 repeat occupies 1053–1091; that stretch reads LETVQRLLPVLCQDHGLTPNQVVAIASNGGKQALESIVA. One copy of the Core repeat 23.5 repeat lies at 1069-1087; that stretch reads LTPNQVVAIASNGGKQALE. The acidic activation domain stretch occupies residues 1136–1364; the sequence is RVNRRIGERT…ELAWLMELLP (229 aa). The short motif at 1222 to 1225 is the Nuclear localization signal NLS1 element; that stretch reads KRAK. The disordered stretch occupies residues 1250–1286; that stretch reads LDAPSPMHEGDQTGASSRKRSRSDRAVTGPSAQHSFE. Positions 1268–1271 match the Nuclear localization signal NLS2 motif; that stretch reads KRSR. The Nuclear localization signal NLS3 motif lies at 1305-1308; sequence KRPR.

It belongs to the transcription activator-like effector (TALE) family.

The protein localises to the secreted. It localises to the host nucleus. Its function is as follows. Avirulence protein. Acts as a transcription factor in rice, inducing expression of a number of host genes including SWEET11 (Os8N3, XA13, AC Q6YZF3) in susceptible plants with the Xa13 allele. Plants with the xa13 allele, which has an altered promoter, are resistant to bacterial blight caused by this bacterial strain and do not induce SWEET11. The xa13 allele elicits an atypical hypersensitive response (HR). PthXo1 binds SWEET11 promoter DNA in a sequence-specific manner. The protein is TAL effector protein PthXo1 (pthXo1) of Xanthomonas oryzae pv. oryzae (strain PXO99A).